Here is a 321-residue protein sequence, read N- to C-terminus: Probable pectate lyase A (321 aa).

A signal peptide spans 1 to 20 (MANFKLFLALAACLSGQALA). N-linked (GlcNAc...) asparagine glycosylation is present at asparagine 93. Aspartate 134, aspartate 163, and aspartate 167 together coordinate Ca(2+). Residue arginine 220 is part of the active site.

This sequence belongs to the polysaccharide lyase 1 family. The cofactor is Ca(2+).

The protein resides in the secreted. It carries out the reaction Eliminative cleavage of (1-&gt;4)-alpha-D-galacturonan to give oligosaccharides with 4-deoxy-alpha-D-galact-4-enuronosyl groups at their non-reducing ends.. Pectinolytic enzyme consist of four classes of enzymes: pectin lyase, polygalacturonase, pectin methylesterase and rhamnogalacturonase. Among pectinolytic enzymes, pectin lyase is the most important in depolymerization of pectin, since it cleaves internal glycosidic bonds of highly methylated pectins. Favors pectate, the anion, over pectin, the methyl ester. The polypeptide is Probable pectate lyase A (plyA) (Aspergillus flavus (strain ATCC 200026 / FGSC A1120 / IAM 13836 / NRRL 3357 / JCM 12722 / SRRC 167)).